The following is a 134-amino-acid chain: Thioredoxin H2-2 (134 aa).

The tract at residues 1–20 is disordered; it reads MGSFFSTMFTPPPAADDGGD. The Thioredoxin domain occupies 3–130; sequence SFFSTMFTPP…LERKVNMFIS (128 aa). Catalysis depends on nucleophile residues C56 and C59. A disulfide bridge connects residues C56 and C59.

It belongs to the thioredoxin family. Plant H-type subfamily.

The protein resides in the cytoplasm. Probable thiol-disulfide oxidoreductase that may be involved in the redox regulation of a number of cytosolic enzymes. This Oryza sativa subsp. japonica (Rice) protein is Thioredoxin H2-2.